The following is a 151-amino-acid chain: MQVILMETVEALGLAGTEVKVAPGYARNFLFPRQKAMAATPANRRRMEQMRAKIELQIAKERGAAQEAAKKLEGVVCRISAKVSNEGRLYGSVTVGDIVEALAARDITVSKKMVLLRENIKEVGTYPVGIYLYKDVVPEISVEIVADEKAE.

The protein belongs to the bacterial ribosomal protein bL9 family.

Binds to the 23S rRNA. In Desulfosudis oleivorans (strain DSM 6200 / JCM 39069 / Hxd3) (Desulfococcus oleovorans), this protein is Large ribosomal subunit protein bL9.